We begin with the raw amino-acid sequence, 469 residues long: Glutamate--tRNA ligase (469 aa).

The 'HIGH' region signature appears at 9-19; sequence PSPTGFLHVGG. Zn(2+) contacts are provided by Cys-98, Cys-100, Cys-125, and Asp-127. Positions 236-240 match the 'KMSKS' region motif; that stretch reads KLSKR. ATP is bound at residue Lys-239.

It belongs to the class-I aminoacyl-tRNA synthetase family. Glutamate--tRNA ligase type 1 subfamily. As to quaternary structure, monomer. Zn(2+) is required as a cofactor.

It is found in the cytoplasm. The catalysed reaction is tRNA(Glu) + L-glutamate + ATP = L-glutamyl-tRNA(Glu) + AMP + diphosphate. In terms of biological role, catalyzes the attachment of glutamate to tRNA(Glu) in a two-step reaction: glutamate is first activated by ATP to form Glu-AMP and then transferred to the acceptor end of tRNA(Glu). The chain is Glutamate--tRNA ligase from Shewanella woodyi (strain ATCC 51908 / MS32).